Here is a 789-residue protein sequence, read N- to C-terminus: LPS-assembly protein LptD (789 aa).

An N-terminal signal peptide occupies residues 1–39 (MPPRQLSQTTPSCAVVPRKRRLVAALIAVPGLMPALAHA).

Belongs to the LptD family. As to quaternary structure, component of the lipopolysaccharide transport and assembly complex. Interacts with LptE and LptA.

The protein resides in the cell outer membrane. Its function is as follows. Together with LptE, is involved in the assembly of lipopolysaccharide (LPS) at the surface of the outer membrane. This chain is LPS-assembly protein LptD, found in Paraburkholderia xenovorans (strain LB400).